A 174-amino-acid chain; its full sequence is Small t antigen (174 aa).

N-acetylmethionine; by host is present on Met-1. Positions 12-75 (QLMDLLGLER…VKYAHQPDFG (64 aa)) constitute a J domain. The C4-type; atypical zinc finger occupies 103–116 (CAKKMSANCICLLC). Residues 122–143 (HENRKLYRKDPLVWVDCYCFDC) form an H1C3-type; atypical zinc finger.

In terms of assembly, interacts with host PPP2R1A; the interaction inhibits PP2A activity.

Its subcellular location is the host cytoplasm. It localises to the host nucleus. Functionally, promotes efficient viral genome replication by accelerating both G1 and S phase progression of the cell cycle. Inhibits host PP2A by binding to the A subunit, thereby displacing lower affinity regulatory B subunit. Inactivation of PP2A in turn results in the transactivation of cyclin A and cyclin D1 promoters. Late during the infection cycle, ST may induce dephosphorylation of host eIF4E-binding protein EIF4EBP1 leading to the inhibition of cap-dependent translation. May establish and maintain high levels of viral genomes during persistent infection in cell culture. In Simian virus 40 (SV40), this protein is Small t antigen.